Here is a 504-residue protein sequence, read N- to C-terminus: Ammonium transporter 1 member 4 (504 aa).

12 helical membrane-spanning segments follow: residues Leu-12–Ile-32, Leu-55–Gly-75, Val-90–Gly-110, Tyr-136–Ala-156, Phe-161–His-181, Phe-207–Ile-227, Leu-251–Phe-271, Ala-292–Gly-314, Ile-318–Ile-338, Val-344–Cys-364, Leu-377–Phe-397, and Val-430–Ile-450. A Phosphothreonine modification is found at Thr-471.

Belongs to the ammonia transporter channel (TC 1.A.11.2) family. As to expression, specifically expressed in pollen grains and tubes.

It is found in the cell membrane. High affinity ammonium transporter in the plasma membrane. The protein is Ammonium transporter 1 member 4 (AMT1-4) of Arabidopsis thaliana (Mouse-ear cress).